Consider the following 714-residue polypeptide: VIN3-like protein 2 (714 aa).

The PHD-type zinc finger occupies 164-232 (RCSCCICRKY…CFYCVSCGKA (69 aa)). Residues 239-246 (WKKQLTIA) carry the Nuclear localization signal motif. Residues 366 to 463 (GSTKIRFEDV…INVLTRSAEE (98 aa)) form the Fibronectin type-III domain. Positions 478 to 498 (LTNCSTLSSNPSSVEAESNND) are enriched in polar residues. Positions 478-530 (LTNCSTLSSNPSSVEAESNNDYIVPKKPSSKNEDNNSPSVDESAAKRMKRTTD) are disordered. The segment at 602–714 (SMKDNCNNGD…PSGFCMKLWH (113 aa)) is VIN3-Interacting Domain (VID).

Self-interacts. Interacts with VIN3 and VIL1. Component of the plant homeodomain / polycomb repressive complex 2 (PHD-PRC2) large complex during prolonged cold, composed of core PRC2 components (VRN2, EZA1, FIE and MSI1), and three related PHD finger proteins (VIL1, VIL2 and VIN3) that mediates histone H3 trimethylation on 'Lys-27' (H3K27me3).

The protein resides in the nucleus. Its function is as follows. Maybe involved in both the vernalization and photoperiod pathways by regulating gene expression. Binds preferentially to dimethylated histone H3 'Lys-9' (H3K9me2). Promotes flowering in non-inductive photoperiods (e.g. short days) through the maintenance of the epigenetically repressed state of MAF5 via H3K9me2 and plant homeodomain / polycomb repressive complex 2 (PHD-PRC2)-dependent H3K27me3. The protein is VIN3-like protein 2 (VIL2) of Arabidopsis thaliana (Mouse-ear cress).